We begin with the raw amino-acid sequence, 377 residues long: Nucleoside diphosphate kinase homolog 7 (377 aa).

Residues 3-91 (HSERFVFIAE…YTARQLGSKK (89 aa)) enclose the DM10 domain.

It belongs to the NDK family. In terms of assembly, component of sperm flagellar doublet microtubules. Component of the gamma-tubulin ring complex. As to expression, expressed in trachea multiciliated cells.

The protein localises to the cytoplasm. It is found in the cytoskeleton. Its subcellular location is the microtubule organizing center. It localises to the centrosome. The protein resides in the nucleus. The protein localises to the spindle. It is found in the cilium axoneme. Its subcellular location is the flagellum axoneme. It localises to the cell projection. The protein resides in the cilium. Possesses an intrinsic kinase activity. Displays 3'-5' exonuclease activity with a preference for single-stranded DNA. Does not seem to have nucleoside diphosphate kinase activity. Functional component of the gamma-tubulin ring complex, implicated in the regulation of the microtubule-nucleating activity of the gamma-tubulin ring complex in centrosomes, in a kinase activity-dependent manner. Part of the dynein-decorated doublet microtubules (DMTs) in cilia axoneme, which is required for motile cilia beating. The polypeptide is Nucleoside diphosphate kinase homolog 7 (NME7) (Bos taurus (Bovine)).